The chain runs to 79 residues: U-actitoxin-Avd8a (79 aa).

An N-terminal signal peptide occupies residues 1 to 19 (MKSLVIVFVVLLGVAMISA). The propeptide occupies 20-36 (NEEELLAILQDQRNDAR).

This sequence belongs to the sea anemone 8 toxin family.

It localises to the secreted. The protein localises to the nematocyst. This chain is U-actitoxin-Avd8a, found in Anemonia viridis (Snakelocks anemone).